We begin with the raw amino-acid sequence, 143 residues long: Flagellar assembly factor FliW (143 aa).

The protein belongs to the FliW family. As to quaternary structure, interacts with translational regulator CsrA and flagellin(s).

It is found in the cytoplasm. In terms of biological role, acts as an anti-CsrA protein, binds CsrA and prevents it from repressing translation of its target genes, one of which is flagellin. Binds to flagellin and participates in the assembly of the flagellum. This Bacillus licheniformis (strain ATCC 14580 / DSM 13 / JCM 2505 / CCUG 7422 / NBRC 12200 / NCIMB 9375 / NCTC 10341 / NRRL NRS-1264 / Gibson 46) protein is Flagellar assembly factor FliW.